The following is a 105-amino-acid chain: U2-lycotoxin-Ls1d (105 aa).

A signal peptide spans Met1–Ser17. Positions Phe18–Arg41 are excised as a propeptide. 4 disulfides stabilise this stretch: Cys51-Cys67, Cys58-Cys97, Cys60-Cys83, and Cys69-Cys81.

This sequence belongs to the neurotoxin 04 (omega-agtx) family. 01 (type I omega-agtx) subfamily. As to expression, expressed by the venom gland.

The protein resides in the secreted. Functionally, insecticidal to house crickets. It induces an excitatory slow-onset impact that leads to irreversible spastic paralysis. It also modifies human voltage-gated potassium channel Kv1.5/KCNA5. Most likely, it binds to the voltage-sensing domain of the channel, suggesting it does not block the pore but prevents its opening at physiological membrane potentials. The recombinant peptide binds to the channel in an irreversible manner and slows down the hKv1.5 current activation kinetics. It is not toxic to mice, when intracranially injected (at 0.5 ug/g mouse). This chain is U2-lycotoxin-Ls1d, found in Lycosa singoriensis (Wolf spider).